The following is a 200-amino-acid chain: Probable nicotinate-nucleotide adenylyltransferase (200 aa).

It belongs to the NadD family.

It catalyses the reaction nicotinate beta-D-ribonucleotide + ATP + H(+) = deamido-NAD(+) + diphosphate. It participates in cofactor biosynthesis; NAD(+) biosynthesis; deamido-NAD(+) from nicotinate D-ribonucleotide: step 1/1. Catalyzes the reversible adenylation of nicotinate mononucleotide (NaMN) to nicotinic acid adenine dinucleotide (NaAD). This chain is Probable nicotinate-nucleotide adenylyltransferase, found in Clavibacter michiganensis subsp. michiganensis (strain NCPPB 382).